A 237-amino-acid chain; its full sequence is DCN1-like protein 5 (237 aa).

3 positions are modified to phosphoserine: S9, S41, and S48. The region spanning 46-232 is the DCUN1 domain; that stretch reads FSSKKCLAWF…LLDEFVEWQK (187 aa).

As to quaternary structure, part of a complex that contains DCUN1D5, CUL1 and RBX1; this interaction is bridged by CUL1. Interacts (via the DCUN1 domain) with the unneddylated cullins: interacts with CUL1, CUL2, CUL3, CUL4A, CUL4B and CUL5; these interactions promote the cullin neddylation and the identity of the cullin dictates the affinity of the interaction. Interacts (via DCUN1 domain) with UBE2M (N-terminally acetylated form) and probably with UBE2F (N-terminally acetylated form). May also interact with regulators or subunits of cullin-RING ligases such as RBX1, RNF7, ELOB and DDB1; these interactions are bridged by cullins. Interacts with CAND1; this interaction is bridged by cullins and strongly inhibits the neddylation of cullins. These CAND-cullin-DCNL complexes can only be neddylated in the presence of a substrate adapter. Phosphorylation at Ser-41 is independent of cullin's interaction. Phosphorylated in response to both TICAM1 and MYD88 dependent Toll-like receptor (TLR) pathway activation. Phosphorylated in response to IL1B stimulation.

It localises to the nucleus. The protein localises to the cytoplasm. Its subcellular location is the cytoskeleton. The protein resides in the spindle. Its function is as follows. Contributes to the neddylation of all cullins by transferring NEDD8 from N-terminally acetylated NEDD8-conjugating E2s enzyme to different cullin C-terminal domain-RBX complexes which is necessary for the activation of cullin-RING E3 ubiquitin ligases (CRLs). May play a role in DNA damage response and may participate in cell proliferation and anchorage-independent cell growth. This is DCN1-like protein 5 from Pongo abelii (Sumatran orangutan).